Consider the following 441-residue polypeptide: UDP-N-acetylmuramoylalanine--D-glutamate ligase (441 aa).

129–135 (GTNGKST) contacts ATP.

Belongs to the MurCDEF family.

The protein resides in the cytoplasm. It carries out the reaction UDP-N-acetyl-alpha-D-muramoyl-L-alanine + D-glutamate + ATP = UDP-N-acetyl-alpha-D-muramoyl-L-alanyl-D-glutamate + ADP + phosphate + H(+). It functions in the pathway cell wall biogenesis; peptidoglycan biosynthesis. Its function is as follows. Cell wall formation. Catalyzes the addition of glutamate to the nucleotide precursor UDP-N-acetylmuramoyl-L-alanine (UMA). The polypeptide is UDP-N-acetylmuramoylalanine--D-glutamate ligase (Zymomonas mobilis subsp. mobilis (strain ATCC 31821 / ZM4 / CP4)).